The sequence spans 171 residues: Adenine phosphoribosyltransferase (171 aa).

The protein belongs to the purine/pyrimidine phosphoribosyltransferase family. Homodimer.

It is found in the cytoplasm. It catalyses the reaction AMP + diphosphate = 5-phospho-alpha-D-ribose 1-diphosphate + adenine. The protein operates within purine metabolism; AMP biosynthesis via salvage pathway; AMP from adenine: step 1/1. Its function is as follows. Catalyzes a salvage reaction resulting in the formation of AMP, that is energically less costly than de novo synthesis. The chain is Adenine phosphoribosyltransferase from Mycoplasmopsis fermentans (strain ATCC 19989 / NBRC 14854 / NCTC 10117 / PG18) (Mycoplasma fermentans).